We begin with the raw amino-acid sequence, 314 residues long: Glutathione synthetase (314 aa).

Residues 125-309 (KLFVMNFPQL…VAAKVWDTIE (185 aa)) enclose the ATP-grasp domain. 151–207 (RDKHGAVVMKPLHGHGGAAVFRVMPQDMNFGSLFDMFTVTFKEPWVIQQFIPEVKHG) is an ATP binding site. Glu-280 and Asn-282 together coordinate Mg(2+).

The protein belongs to the prokaryotic GSH synthase family. The cofactor is Mg(2+). It depends on Mn(2+) as a cofactor.

It catalyses the reaction gamma-L-glutamyl-L-cysteine + glycine + ATP = glutathione + ADP + phosphate + H(+). The protein operates within sulfur metabolism; glutathione biosynthesis; glutathione from L-cysteine and L-glutamate: step 2/2. This Bradyrhizobium diazoefficiens (strain JCM 10833 / BCRC 13528 / IAM 13628 / NBRC 14792 / USDA 110) protein is Glutathione synthetase.